The sequence spans 215 residues: dITP/XTP pyrophosphatase (215 aa).

13 to 18 (THNIGK) contacts substrate. D74 functions as the Proton acceptor in the catalytic mechanism. Residue D74 participates in Mg(2+) binding. Substrate-binding positions include S75, 163–166 (FGFD), K186, and 199–200 (HR).

It belongs to the HAM1 NTPase family. In terms of assembly, homodimer. Requires Mg(2+) as cofactor.

It catalyses the reaction XTP + H2O = XMP + diphosphate + H(+). It carries out the reaction dITP + H2O = dIMP + diphosphate + H(+). The enzyme catalyses ITP + H2O = IMP + diphosphate + H(+). Functionally, pyrophosphatase that catalyzes the hydrolysis of nucleoside triphosphates to their monophosphate derivatives, with a high preference for the non-canonical purine nucleotides XTP (xanthosine triphosphate), dITP (deoxyinosine triphosphate) and ITP. Seems to function as a house-cleaning enzyme that removes non-canonical purine nucleotides from the nucleotide pool, thus preventing their incorporation into DNA/RNA and avoiding chromosomal lesions. In Bartonella henselae (strain ATCC 49882 / DSM 28221 / CCUG 30454 / Houston 1) (Rochalimaea henselae), this protein is dITP/XTP pyrophosphatase.